A 115-amino-acid polypeptide reads, in one-letter code: Pancreatic progenitor cell differentiation and proliferation factor B (115 aa).

The segment at 21–48 (IGSTSSSSSCGSSEYSGEVIPHHPGLPK) is disordered. The segment covering 22–37 (GSTSSSSSCGSSEYSG) has biased composition (low complexity).

The protein belongs to the PPDPF family.

Probable regulator of exocrine pancreas development. This chain is Pancreatic progenitor cell differentiation and proliferation factor B (ppdpfb), found in Danio rerio (Zebrafish).